The primary structure comprises 156 residues: Small ribosomal subunit protein uS7 (156 aa).

Belongs to the universal ribosomal protein uS7 family. Part of the 30S ribosomal subunit. Contacts proteins S9 and S11.

In terms of biological role, one of the primary rRNA binding proteins, it binds directly to 16S rRNA where it nucleates assembly of the head domain of the 30S subunit. Is located at the subunit interface close to the decoding center, probably blocks exit of the E-site tRNA. The sequence is that of Small ribosomal subunit protein uS7 from Vibrio atlanticus (strain LGP32) (Vibrio splendidus (strain Mel32)).